Reading from the N-terminus, the 149-residue chain is D-aminoacyl-tRNA deacylase (149 aa).

Positions Gly137 to Pro138 match the Gly-cisPro motif, important for rejection of L-amino acids motif.

The protein belongs to the DTD family. Homodimer.

The protein localises to the cytoplasm. It catalyses the reaction glycyl-tRNA(Ala) + H2O = tRNA(Ala) + glycine + H(+). The enzyme catalyses a D-aminoacyl-tRNA + H2O = a tRNA + a D-alpha-amino acid + H(+). An aminoacyl-tRNA editing enzyme that deacylates mischarged D-aminoacyl-tRNAs. Also deacylates mischarged glycyl-tRNA(Ala), protecting cells against glycine mischarging by AlaRS. Acts via tRNA-based rather than protein-based catalysis; rejects L-amino acids rather than detecting D-amino acids in the active site. By recycling D-aminoacyl-tRNA to D-amino acids and free tRNA molecules, this enzyme counteracts the toxicity associated with the formation of D-aminoacyl-tRNA entities in vivo and helps enforce protein L-homochirality. This is D-aminoacyl-tRNA deacylase from Clostridium kluyveri (strain ATCC 8527 / DSM 555 / NBRC 12016 / NCIMB 10680 / K1).